We begin with the raw amino-acid sequence, 240 residues long: Lactate utilization protein C (240 aa).

The protein belongs to the LutC/YkgG family.

Functionally, is involved in L-lactate degradation and allows cells to grow with lactate as the sole carbon source. The protein is Lactate utilization protein C of Geobacillus kaustophilus (strain HTA426).